Here is a 76-residue protein sequence, read N- to C-terminus: Putative defensin-like protein 121 (76 aa).

An N-terminal signal peptide occupies residues 1-26; it reads MTYKATILAIFMIILVLGIGTKETRG. Disulfide bonds link cysteine 30–cysteine 74, cysteine 39–cysteine 59, cysteine 44–cysteine 68, and cysteine 48–cysteine 70.

It belongs to the DEFL family.

It localises to the secreted. This is Putative defensin-like protein 121 (LCR55) from Arabidopsis thaliana (Mouse-ear cress).